We begin with the raw amino-acid sequence, 125 residues long: Large ribosomal subunit protein bL12 (125 aa).

It belongs to the bacterial ribosomal protein bL12 family. As to quaternary structure, homodimer. Part of the ribosomal stalk of the 50S ribosomal subunit. Forms a multimeric L10(L12)X complex, where L10 forms an elongated spine to which 2 to 4 L12 dimers bind in a sequential fashion. Binds GTP-bound translation factors.

Forms part of the ribosomal stalk which helps the ribosome interact with GTP-bound translation factors. Is thus essential for accurate translation. The protein is Large ribosomal subunit protein bL12 of Methylorubrum extorquens (strain CM4 / NCIMB 13688) (Methylobacterium extorquens).